A 231-amino-acid chain; its full sequence is Large ribosomal subunit protein uL1 (231 aa).

Belongs to the universal ribosomal protein uL1 family. Part of the 50S ribosomal subunit.

Its function is as follows. Binds directly to 23S rRNA. The L1 stalk is quite mobile in the ribosome, and is involved in E site tRNA release. Protein L1 is also a translational repressor protein, it controls the translation of the L11 operon by binding to its mRNA. This chain is Large ribosomal subunit protein uL1, found in Teredinibacter turnerae (strain ATCC 39867 / T7901).